Consider the following 313-residue polypeptide: Olfactory receptor 4M1 (313 aa).

At 1–25 the chain is on the extracellular side; sequence METANYTKVTEFVLTGLSQTREVQL. N-linked (GlcNAc...) asparagine glycosylation occurs at asparagine 5. The chain crosses the membrane as a helical span at residues 26–49; it reads VLFVIFLSFYLFILPGNILIICTI. The Cytoplasmic portion of the chain corresponds to 50–57; the sequence is RLDPHLTS. The helical transmembrane segment at 58-79 threads the bilayer; sequence PMYFLLANLALLDIWYSSITAP. Residues 80–100 are Extracellular-facing; the sequence is KMLIDFFVERKIISFGGCIAQ. The cysteines at positions 97 and 189 are disulfide-linked. The helical transmembrane segment at 101-120 threads the bilayer; it reads LFFLHFVGASEMFLLTVMAY. At 121–139 the chain is on the cytoplasmic side; the sequence is DRYAAICRPLHYATIMNRR. The chain crosses the membrane as a helical span at residues 140-158; it reads LCCILVALSWMGGFIHSII. At 159–195 the chain is on the extracellular side; that stretch reads QVALIVRLPFCGPNELDSYFCDITQVVRIACANTFPE. Residues 196–219 form a helical membrane-spanning segment; the sequence is ELVMICSSGLISVVCFIALLMSYA. Residues 220–237 are Cytoplasmic-facing; it reads FLLALLKKHSGSGENTNR. A helical membrane pass occupies residues 238 to 260; it reads AMSTCYSHITIVVLMFGPSIYIY. Residues 261 to 271 lie on the Extracellular side of the membrane; sequence ARPFDSFSLDK. A helical membrane pass occupies residues 272–291; that stretch reads VVSVFHTVIFPLLNPIIYTL. Over 292–313 the chain is Cytoplasmic; the sequence is RNKEVKAAMRKVVTKYILCEEK.

The protein belongs to the G-protein coupled receptor 1 family. Highly expressed in the testis and olfactory bulb.

It localises to the cell membrane. Functionally, olfactory receptor that acts as a receptor of Asprosin hormone, potentially at the surface of hepatocytes and may help to promote hepatocyte glucose release. This chain is Olfactory receptor 4M1, found in Homo sapiens (Human).